The primary structure comprises 215 residues: Probable GTP-binding protein EngB (215 aa).

Residues 26–200 (EGIEVAFAGR…RAKLDEWFAP (175 aa)) form the EngB-type G domain. Residues 34-41 (GRSNAGKS), 61-65 (GRTQL), 79-82 (DLPG), 146-149 (TKAD), and 179-181 (FSS) each bind GTP. 2 residues coordinate Mg(2+): Ser-41 and Thr-63.

This sequence belongs to the TRAFAC class TrmE-Era-EngA-EngB-Septin-like GTPase superfamily. EngB GTPase family. Requires Mg(2+) as cofactor.

Functionally, necessary for normal cell division and for the maintenance of normal septation. The sequence is that of Probable GTP-binding protein EngB from Aliivibrio fischeri (strain ATCC 700601 / ES114) (Vibrio fischeri).